Reading from the N-terminus, the 338-residue chain is Phenylalanine--tRNA ligase alpha subunit (338 aa).

Glutamate 252 is a Mg(2+) binding site.

Belongs to the class-II aminoacyl-tRNA synthetase family. Phe-tRNA synthetase alpha subunit type 1 subfamily. Tetramer of two alpha and two beta subunits. The cofactor is Mg(2+).

It is found in the cytoplasm. The enzyme catalyses tRNA(Phe) + L-phenylalanine + ATP = L-phenylalanyl-tRNA(Phe) + AMP + diphosphate + H(+). This is Phenylalanine--tRNA ligase alpha subunit from Pseudomonas syringae pv. tomato (strain ATCC BAA-871 / DC3000).